Reading from the N-terminus, the 1370-residue chain is DNA-directed RNA polymerase subunit beta (1370 aa).

It belongs to the RNA polymerase beta chain family. In terms of assembly, the RNAP catalytic core consists of 2 alpha, 1 beta, 1 beta' and 1 omega subunit. When a sigma factor is associated with the core the holoenzyme is formed, which can initiate transcription.

The enzyme catalyses RNA(n) + a ribonucleoside 5'-triphosphate = RNA(n+1) + diphosphate. DNA-dependent RNA polymerase catalyzes the transcription of DNA into RNA using the four ribonucleoside triphosphates as substrates. The protein is DNA-directed RNA polymerase subunit beta of Syntrophobacter fumaroxidans (strain DSM 10017 / MPOB).